The chain runs to 91 residues: Lactococcin-B immunity protein (91 aa).

Its function is as follows. Imparts immunity to lactococcin-B to naturally sensitive host strains. The sequence is that of Lactococcin-B immunity protein (lciB) from Lactococcus lactis subsp. cremoris (Streptococcus cremoris).